A 307-amino-acid polypeptide reads, in one-letter code: Cyclooctat-9-en-7-ol synthase (307 aa).

Mg(2+) is bound by residues aspartate 110, asparagine 220, serine 224, and glutamate 228. The DDXXD motif; degenerate signature appears at 110–113; sequence DDMD. The short motif at 220–228 is the NSE/DTE motif element; the sequence is NDFYSYDRE.

Belongs to the terpene synthase family. In terms of assembly, homodimer. It depends on Mg(2+) as a cofactor.

It catalyses the reaction geranylgeranyl diphosphate + H2O = cyclooctat-9-en-7-ol + diphosphate. Functionally, catalyzes the cyclization of the linear isoprenoid intermediate geranylgeranyl diphosphate to tricycclic cyclooctat-9-en-7-ol in the cyclooctatin biosynthesis pathway. Cyclooctatin is a potent inhibitor of lysophospholipase. This Streptomyces melanosporofaciens protein is Cyclooctat-9-en-7-ol synthase.